The primary structure comprises 308 residues: Cell division protein FtsX (308 aa).

Residues 1–24 (MISRFFRHLFEALKSLKRNGWMTV) lie on the Cytoplasmic side of the membrane. A helical membrane pass occupies residues 25–45 (AAVSSVMITLTLVAIFASVIF). Over 46-178 (NTAKLATDIE…NTERLFKLAS (133 aa)) the chain is Extracellular. Residues 179–199 (FIRVWGLGIAALLIFIAVFLI) traverse the membrane as a helical segment. The Cytoplasmic portion of the chain corresponds to 200–236 (SNTIRITIISRSREIQIMRLVGAKNSYIRGPFLLEGA). The chain crosses the membrane as a helical span at residues 237–257 (FIGLLGAIAPSVLVFIVYQIV). The Extracellular portion of the chain corresponds to 258–276 (YQSVNKSLVGQNLSMISPD). Residues 277–297 (LFSPLMIALLFVIGVFIGSLG) traverse the membrane as a helical segment. The Cytoplasmic portion of the chain corresponds to 298–308 (SGISMRRFLKI).

This sequence belongs to the ABC-4 integral membrane protein family. FtsX subfamily. Homodimer. Interacts with FtsE; forms a membrane-associated complex. Interacts (via large extracellular loop) with PcsB (via N-terminal coiled-coil domain). This interaction directs PcsB to equatorial and septal sites of dividing cells.

The protein resides in the cell membrane. In terms of biological role, part of the ABC transporter FtsEX involved in asymmetric cellular division facilitating the initiation of sporulation. Required in maintaining normal growth and cellular morphology. The sequence is that of Cell division protein FtsX from Streptococcus pneumoniae serotype 2 (strain D39 / NCTC 7466).